The sequence spans 168 residues: NADH-quinone oxidoreductase subunit I (168 aa).

4Fe-4S ferredoxin-type domains are found at residues Leu-58–Gly-88 and Val-99–Asn-128. Positions 68, 71, 74, 78, 108, 111, 114, and 118 each coordinate [4Fe-4S] cluster.

It belongs to the complex I 23 kDa subunit family. NDH-1 is composed of 14 different subunits. Subunits NuoA, H, J, K, L, M, N constitute the membrane sector of the complex. It depends on [4Fe-4S] cluster as a cofactor.

It localises to the cell inner membrane. The enzyme catalyses a quinone + NADH + 5 H(+)(in) = a quinol + NAD(+) + 4 H(+)(out). Its function is as follows. NDH-1 shuttles electrons from NADH, via FMN and iron-sulfur (Fe-S) centers, to quinones in the respiratory chain. The immediate electron acceptor for the enzyme in this species is believed to be ubiquinone. Couples the redox reaction to proton translocation (for every two electrons transferred, four hydrogen ions are translocated across the cytoplasmic membrane), and thus conserves the redox energy in a proton gradient. The protein is NADH-quinone oxidoreductase subunit I of Bradyrhizobium diazoefficiens (strain JCM 10833 / BCRC 13528 / IAM 13628 / NBRC 14792 / USDA 110).